Here is a 350-residue protein sequence, read N- to C-terminus: Thymidine kinase (350 aa).

15–22 (GAHGLGKT) contacts ATP. The active-site Proton acceptor is the Glu44. A substrate-binding site is contributed by Gln88. ATP is bound at residue Arg178. Arg184 contributes to the substrate binding site.

Belongs to the herpesviridae thymidine kinase family. As to quaternary structure, homodimer.

The catalysed reaction is thymidine + ATP = dTMP + ADP + H(+). Catalyzes the transfer of the gamma-phospho group of ATP to thymidine to generate dTMP in the salvage pathway of pyrimidine synthesis. The dTMP serves as a substrate for DNA polymerase during viral DNA replication. Allows the virus to be reactivated and to grow in non-proliferative cells lacking a high concentration of phosphorylated nucleic acid precursors. The protein is Thymidine kinase of Bos taurus (Bovine).